The following is a 271-amino-acid chain: Calretinin (271 aa).

EF-hand domains lie at 16–51 (LTAS…LEKA), 63–98 (NFGE…EENF), 107–142 (GSSA…LLKK), 151–186 (KLQE…QENF), 195–230 (LTSE…LYEK), and 235–270 (MNIQ…SEPP). Residues Asp-29, Asp-31, Asn-33, Tyr-35, Glu-40, Asp-76, Asn-78, Asp-80, Lys-82, Glu-87, Asp-120, Asp-122, Ser-124, Tyr-126, Glu-131, Asp-164, Asn-166, Asp-168, Lys-170, Glu-175, Asp-208, Asp-210, Ser-212, Tyr-214, and Glu-219 each coordinate Ca(2+). Position 214 is a phosphotyrosine (Tyr-214).

It belongs to the calbindin family. As to expression, widely expressed in central nervous system. Expressed in type I unipolar brush cells of the cerebellum (at protein level).

The protein localises to the synapse. It localises to the cell projection. The protein resides in the dendrite. Functionally, calcium-binding protein involved in calcium homeostasis and signal transduction. It plays a critical role in buffering intracellular calcium levels and modulating calcium-dependent signaling pathways. Predominantly expressed in specific neuronal populations, influences synaptic plasticity and neuronal excitability, contributing to learning and memory. During embryonic development, it facilitates neuronal differentiation and maturation. The protein is Calretinin (Calb2) of Mus musculus (Mouse).